The sequence spans 90 residues: Neuropeptide-like 3 (90 aa).

Residues 1 to 16 (MFKLCVFVALLSLAAA) form the signal peptide. 2 propeptides span residues 17-54 (APAP…LAPQ) and 67-79 (AITQ…LLIK). Isoleucine 89 bears the Isoleucine amide mark.

It is found in the secreted. The chain is Neuropeptide-like 3 (Nplp3) from Drosophila melanogaster (Fruit fly).